We begin with the raw amino-acid sequence, 530 residues long: Chaperone Ric-8A (530 aa).

Ser435 carries the post-translational modification Phosphoserine; by CK2. Phosphothreonine; by CK2 is present on Thr440. Phosphothreonine is present on Thr442. Residues Ser501, Ser522, Ser523, and Ser527 each carry the phosphoserine modification.

The protein belongs to the synembryn family. As to quaternary structure, interacts with GDP-bound G alpha proteins GNAI1, GNAO1 and GNAQ, and with GNA13 with lower affinity. Does not interact with G-alpha proteins when they are in complex with subunits beta and gamma. Interacts (via C-terminus) with RGS14; the interaction stimulates the dissociation of the complex between RGS14 and the active GTP-bound form of GNAI1. Interacts with NCS1; interaction is favored in the absence of Ca(2+) and myristoylation of NCS1 is not required. Phosphorylated at Ser-435 and Thr-440 by CK2, stabilizing its interface with G alpha proteins.

It localises to the cytoplasm. Its subcellular location is the cell cortex. Chaperone that specifically binds and folds nascent G alpha proteins prior to G protein heterotrimer formation, promoting their stability and activity: folds GNAI1, GNAO1, GNA13 and GNAQ. Does not fold G(s) G-alpha proteins GNAS nor GNAL. Also acts as a guanine nucleotide exchange factor (GEF) for G alpha proteins by stimulating exchange of bound GDP for free GTP. Involved in regulation of microtubule pulling forces during mitotic movement of chromosomes by stimulating G(i)-alpha protein (GNAI1), possibly leading to release G(i)-alpha-GTP and NuMA proteins from the NuMA-GPSM2-G(i)-alpha-GDP complex. Also acts as an activator for G(q)-alpha (GNAQ) protein by enhancing the G(q)-coupled receptor-mediated ERK activation. The sequence is that of Chaperone Ric-8A from Rattus norvegicus (Rat).